Here is a 325-residue protein sequence, read N- to C-terminus: G/U mismatch-specific uracil DNA glycosylase (325 aa).

The span at 1–11 (MNDIETRDTGT) shows a compositional bias: basic and acidic residues. Residues 1–50 (MNDIETRDTGTKNDNSSEFNLSVKSHKRKRSFDDENLELEESREETSGGI) are disordered. Polar residues predominate over residues 12-23 (KNDNSSEFNLSV). Positions 34–43 (DENLELEESR) are enriched in acidic residues.

The protein belongs to the uracil-DNA glycosylase (UDG) superfamily. TDG/mug family.

The protein resides in the nucleus. The catalysed reaction is Specifically hydrolyzes mismatched double-stranded DNA and polynucleotides, releasing free uracil.. Its function is as follows. Removes uracil from G/U mispairs in ssDNA. Also corrects G/G mispairs. Does not catalyze the removal of thymine from G/T mispairs. This is G/U mismatch-specific uracil DNA glycosylase (thp1) from Schizosaccharomyces pombe (strain 972 / ATCC 24843) (Fission yeast).